The following is a 228-amino-acid chain: MNSLDANTRNTKSKGDVRSLRSAGNIPGIIYGGPDQNQKVTVLKKTLKSLIDKGSFLSNIITLNLDGKPQNVLPREITYNVISDEPTHIDFLRVVPGVKIRIEVPVVFINHETSPGLKRGGVLNIVRRKIELKCPSEKIPSAITIDLDGVDIGESFKISSVKLEEGVTPTIIGRDFVIATLAAPTVMKEPEKPAEAEAEAAEDGKEAAPAAEGDKKDDGEKKATEEKK.

The span at 1-10 (MNSLDANTRN) shows a compositional bias: polar residues. 2 disordered regions span residues 1–20 (MNSL…VRSL) and 187–228 (MKEP…EEKK). A compositionally biased stretch (basic and acidic residues) spans 202-228 (EDGKEAAPAAEGDKKDDGEKKATEEKK).

This sequence belongs to the bacterial ribosomal protein bL25 family. CTC subfamily. In terms of assembly, part of the 50S ribosomal subunit; part of the 5S rRNA/L5/L18/L25 subcomplex. Contacts the 5S rRNA. Binds to the 5S rRNA independently of L5 and L18.

Its function is as follows. This is one of the proteins that binds to the 5S RNA in the ribosome where it forms part of the central protuberance. The chain is Large ribosomal subunit protein bL25 from Pelagibacter ubique (strain HTCC1062).